The primary structure comprises 99 residues: Probable small ribosomal subunit protein cS23 (99 aa).

This sequence belongs to the chloroplast-specific ribosomal protein cS23 family. Part of the 30S ribosomal subunit.

Probably a ribosomal protein or a ribosome-associated protein. In Synechococcus sp. (strain JA-2-3B'a(2-13)) (Cyanobacteria bacterium Yellowstone B-Prime), this protein is Probable small ribosomal subunit protein cS23.